The chain runs to 284 residues: MRYTGLMGTLLTLVNLLQLAGTLRIAAFNIRTFGETKMSNATLSVYFVKILSRYDIAVIQEVRDSHLVAVGKLLDELNRDKPDTYRYVVSEPLGRKSYKEQYLFVYRPDQVSILDSYQYDDGCEPCGNDTFSREPAIVKFFSPYTEVQEFAIVPLHAAPTEAVSEIDALYDVYLDVWQKWGLEDIMFMGDFNAGCSYVTSSQWSSIRLRTSPIFQWLIPDSADTTVTSTHCAYDRIVVAGALLQAAVVPNSAVPFDFQAEYGLSNQLAEAISDHYPVEVTLRKI.

Positions 1–22 (MRYTGLMGTLLTLVNLLQLAGT) are cleaved as a signal peptide. The N-linked (GlcNAc...) asparagine glycan is linked to asparagine 40. Glutamate 100 is a catalytic residue. Cysteine 123 and cysteine 126 are joined by a disulfide. Asparagine 128 is a glycosylation site (N-linked (GlcNAc...) asparagine). Residue histidine 156 is part of the active site. A disulfide bridge connects residues cysteine 195 and cysteine 231.

Belongs to the DNase I family. The cofactor is Ca(2+). Mg(2+) is required as a cofactor. N-glycosylated. As to expression, highly expressed in the parotid and submandibular gland as well as in the kidney and duodenum (at protein level). Expressed at intermediate level in the ileum, mesenterial lymph nodes, liver, ventral prostate, epididymis, ovary and stomach (at protein level). Expressed at low level in the sublingual, preputial, coagulation and pituitary gland (at protein level). Also present in the lachrymal and thyroid glands, striated muscle, intestine, the urinary bladder and the eye.

It is found in the secreted. It localises to the zymogen granule. The protein localises to the nucleus envelope. The enzyme catalyses Endonucleolytic cleavage to 5'-phosphodinucleotide and 5'-phosphooligonucleotide end-products.. In terms of biological role, serum endocuclease secreted into body fluids by a wide variety of exocrine and endocrine organs. Expressed by non-hematopoietic tissues and preferentially cleaves protein-free DNA. Among other functions, seems to be involved in cell death by apoptosis. Binds specifically to G-actin and blocks actin polymerization. Together with DNASE1L3, plays a key role in degrading neutrophil extracellular traps (NETs). NETs are mainly composed of DNA fibers and are released by neutrophils to bind pathogens during inflammation. Degradation of intravascular NETs by DNASE1 and DNASE1L3 is required to prevent formation of clots that obstruct blood vessels and cause organ damage following inflammation. The chain is Deoxyribonuclease-1 from Mus musculus (Mouse).